The chain runs to 267 residues: Small ribosomal subunit protein uS5 (267 aa).

The tract at residues 1-37 (MADEAPARSGFRGGFGSRGGRGGRGRGRGRWARGRGK) is disordered. The span at 11-20 (FRGGFGSRGG) shows a compositional bias: gly residues. Positions 21-34 (RGGRGRGRGRWARG) are enriched in basic residues. Serine 60 bears the Phosphoserine mark. Residues 85–148 (LKDEVLKIMP…ILAKLSVVPV (64 aa)) form the S5 DRBM domain.

This sequence belongs to the universal ribosomal protein uS5 family.

In terms of biological role, component of the ribosome, a large ribonucleoprotein complex responsible for the synthesis of proteins in the cell. The small ribosomal subunit (SSU) binds messenger RNAs (mRNAs) and translates the encoded message by selecting cognate aminoacyl-transfer RNA (tRNA) molecules. The large subunit (LSU) contains the ribosomal catalytic site termed the peptidyl transferase center (PTC), which catalyzes the formation of peptide bonds, thereby polymerizing the amino acids delivered by tRNAs into a polypeptide chain. The nascent polypeptides leave the ribosome through a tunnel in the LSU and interact with protein factors that function in enzymatic processing, targeting, and the membrane insertion of nascent chains at the exit of the ribosomal tunnel. Plays a role in the assembly and function of the 40S ribosomal subunit. Mutations in this protein affects the control of translational fidelity. Involved in nucleolar processing of pre-18S ribosomal RNA and ribosome assembly. Has a specific developmental role during oogenesis. The protein is Small ribosomal subunit protein uS5 (RpS2) of Drosophila melanogaster (Fruit fly).